The chain runs to 382 residues: Layilin (382 aa).

The signal sequence occupies residues 1–21; the sequence is MRPGTALQAVLLAVLLVGLRA. The Extracellular portion of the chain corresponds to 22–235; that stretch reads ATGRLLSASD…SREAALNLAY (214 aa). The 141-residue stretch at 45–185 folds into the C-type lectin domain; it reads TQRPCYKVIY…CNMKNNFICK (141 aa). 2 disulfides stabilise this stretch: Cys71–Cys184 and Cys150–Cys176. An N-linked (GlcNAc...) asparagine glycan is attached at Asn117. A helical membrane pass occupies residues 236-256; it reads ILIPSIPLLLLLVVTTVVCWV. Residues 257 to 382 lie on the Cytoplasmic side of the membrane; sequence WICRKRKREQ…GWVENEIYGY (126 aa). Positions 266–285 are disordered; that stretch reads QPDPSTKKQHTIWPSPHQGN. Phosphoserine is present on residues Ser286 and Ser299. An interaction with NF2 region spans residues 330 to 374; it reads DYDNMAVNPSESGFVTLVSVESGFVTNDIYEFSPDQMGRSKESGW. Residues 337-382 form an interaction with TLN1 region; it reads NPSESGFVTLVSVESGFVTNDIYEFSPDQMGRSKESGWVENEIYGY. A run of 5 repeats spans residues 340-344, 350-354, 356-359, 371-375, and 377-380. A 3 X 5 AA repeats of E-S-G-X-V region spans residues 340–375; the sequence is ESGFVTLVSVESGFVTNDIYEFSPDQMGRSKESGWV. The segment at 356–380 is 2 X 4 AA repeats of N-X-I-Y; sequence NDIYEFSPDQMGRSKESGWVENEIY.

Interacts with NF2, RDX and TLN1.

It is found in the membrane. Its function is as follows. Receptor for hyaluronate. The polypeptide is Layilin (LAYN) (Homo sapiens (Human)).